A 233-amino-acid chain; its full sequence is NSARGFDTVNEKYQECQTKMEEAEKTASEAEQEIQSLNRRIQLLEEDMERSEERLQTATEKLEEASKAADESERNRKVLENLNNASEERTDVLEKQLTEAKLIAEEADKKYDEAARKLAITEVDLERAEARLEAAEAKVLELEEELKVVGNNMKSLEISEQEASQREDSYEETIRDLTQRLKDAENRATEAERTVSKLQKEVDRLEDELLAEKERYKAISDELDQTFAELAGY.

A coiled-coil region spans residues 6 to 222 (FDTVNEKYQE…KERYKAISDE (217 aa)). Residues 48-88 (MERSEERLQTATEKLEEASKAADESERNRKVLENLNNASEE) form a disordered region. The span at 51–79 (SEERLQTATEKLEEASKAADESERNRKVL) shows a compositional bias: basic and acidic residues.

The protein belongs to the tropomyosin family. As to quaternary structure, homodimer.

Tropomyosin, in association with the troponin complex, plays a central role in the calcium dependent regulation of muscle contraction. This is Tropomyosin from Magallana gigas (Pacific oyster).